A 397-amino-acid polypeptide reads, in one-letter code: 1-deoxy-D-xylulose 5-phosphate reductoisomerase (397 aa).

NADPH is bound by residues T10, G11, S12, I13, N38, and N125. K126 serves as a coordination point for 1-deoxy-D-xylulose 5-phosphate. E127 serves as a coordination point for NADPH. D151 serves as a coordination point for Mn(2+). Residues S152, E153, S187, and H210 each coordinate 1-deoxy-D-xylulose 5-phosphate. E153 serves as a coordination point for Mn(2+). G216 is an NADPH binding site. Residues S223, N228, K229, and E232 each coordinate 1-deoxy-D-xylulose 5-phosphate. E232 lines the Mn(2+) pocket.

This sequence belongs to the DXR family. Homodimer. Mg(2+) serves as cofactor. Requires Mn(2+) as cofactor.

It carries out the reaction 2-C-methyl-D-erythritol 4-phosphate + NADP(+) = 1-deoxy-D-xylulose 5-phosphate + NADPH + H(+). It participates in isoprenoid biosynthesis; isopentenyl diphosphate biosynthesis via DXP pathway; isopentenyl diphosphate from 1-deoxy-D-xylulose 5-phosphate: step 1/6. Its function is as follows. Catalyzes the NADPH-dependent rearrangement and reduction of 1-deoxy-D-xylulose-5-phosphate (DXP) to 2-C-methyl-D-erythritol 4-phosphate (MEP). The protein is 1-deoxy-D-xylulose 5-phosphate reductoisomerase of Blochmanniella pennsylvanica (strain BPEN).